The sequence spans 426 residues: Phosphomethylpyrimidine synthase (426 aa).

Substrate contacts are provided by residues asparagine 65, methionine 94, tyrosine 123, histidine 162, serine 184–glycine 186, aspartate 225–arginine 228, and glutamate 264. Histidine 268 provides a ligand contact to Zn(2+). Tyrosine 291 serves as a coordination point for substrate. A Zn(2+)-binding site is contributed by histidine 332. Residues cysteine 408, cysteine 411, and cysteine 415 each coordinate [4Fe-4S] cluster.

The protein belongs to the ThiC family. Requires [4Fe-4S] cluster as cofactor.

The enzyme catalyses 5-amino-1-(5-phospho-beta-D-ribosyl)imidazole + S-adenosyl-L-methionine = 4-amino-2-methyl-5-(phosphooxymethyl)pyrimidine + CO + 5'-deoxyadenosine + formate + L-methionine + 3 H(+). It functions in the pathway cofactor biosynthesis; thiamine diphosphate biosynthesis. In terms of biological role, catalyzes the synthesis of the hydroxymethylpyrimidine phosphate (HMP-P) moiety of thiamine from aminoimidazole ribotide (AIR) in a radical S-adenosyl-L-methionine (SAM)-dependent reaction. The chain is Phosphomethylpyrimidine synthase from Methanococcus maripaludis (strain C5 / ATCC BAA-1333).